A 412-amino-acid chain; its full sequence is Imidazolonepropionase (412 aa).

H73 and H75 together coordinate Fe(3+). The Zn(2+) site is built by H73 and H75. Residues R82, Y145, and H178 each coordinate 4-imidazolone-5-propanoate. Y145 contacts N-formimidoyl-L-glutamate. H247 is a binding site for Fe(3+). Residue H247 coordinates Zn(2+). Q250 serves as a coordination point for 4-imidazolone-5-propanoate. D322 provides a ligand contact to Fe(3+). D322 serves as a coordination point for Zn(2+). 2 residues coordinate N-formimidoyl-L-glutamate: N324 and G326. S327 serves as a coordination point for 4-imidazolone-5-propanoate.

It belongs to the metallo-dependent hydrolases superfamily. HutI family. Requires Zn(2+) as cofactor. It depends on Fe(3+) as a cofactor.

The protein resides in the cytoplasm. The enzyme catalyses 4-imidazolone-5-propanoate + H2O = N-formimidoyl-L-glutamate. The protein operates within amino-acid degradation; L-histidine degradation into L-glutamate; N-formimidoyl-L-glutamate from L-histidine: step 3/3. Functionally, catalyzes the hydrolytic cleavage of the carbon-nitrogen bond in imidazolone-5-propanoate to yield N-formimidoyl-L-glutamate. It is the third step in the universal histidine degradation pathway. The protein is Imidazolonepropionase of Shewanella amazonensis (strain ATCC BAA-1098 / SB2B).